The following is a 322-amino-acid chain: Cytochrome c biogenesis protein CcsA (322 aa).

7 helical membrane-spanning segments follow: residues 9–29 (ILTH…LITL), 44–64 (GMIV…VSSG), 68–88 (LSNL…LHTI), 143–163 (MLLS…ILII), 226–246 (IISL…VWAN), 260–274 (TWAF…IYLH), and 289–309 (IASI…LLGI).

This sequence belongs to the CcmF/CycK/Ccl1/NrfE/CcsA family. May interact with Ccs1.

The protein resides in the plastid. It localises to the chloroplast thylakoid membrane. Its function is as follows. Required during biogenesis of c-type cytochromes (cytochrome c6 and cytochrome f) at the step of heme attachment. The sequence is that of Cytochrome c biogenesis protein CcsA from Hordeum vulgare (Barley).